Reading from the N-terminus, the 305-residue chain is Translation initiation factor eIF2B subunit alpha (305 aa).

This sequence belongs to the eIF-2B alpha/beta/delta subunits family. Component of the translation initiation factor 2B (eIF2B) complex which is a heterodecamer of two sets of five different subunits: alpha, beta, gamma, delta and epsilon. Subunits alpha, beta and delta comprise a regulatory subcomplex and subunits epsilon and gamma comprise a catalytic subcomplex. Within the complex, the hexameric regulatory complex resides at the center, with the two heterodimeric catalytic subcomplexes bound on opposite sides.

It localises to the cytoplasm. The protein localises to the cytosol. Acts as a component of the translation initiation factor 2B (eIF2B) complex, which catalyzes the exchange of GDP for GTP on eukaryotic initiation factor 2 (eIF2) gamma subunit. Its guanine nucleotide exchange factor activity is repressed when bound to eIF2 complex phosphorylated on the alpha subunit, thereby limiting the amount of methionyl-initiator methionine tRNA available to the ribosome and consequently global translation is repressed. The protein is Translation initiation factor eIF2B subunit alpha of Caenorhabditis elegans.